Here is a 346-residue protein sequence, read N- to C-terminus: Secreted frizzled-related protein 4 (346 aa).

The signal sequence occupies residues 1–18 (MFLSILVALCLWLHLALG). The FZ domain occupies 19 to 139 (VRGAPCEAVR…VYDRGVCISP (121 aa)). 5 cysteine pairs are disulfide-bonded: cysteine 24–cysteine 85, cysteine 32–cysteine 78, cysteine 69–cysteine 108, cysteine 97–cysteine 136, and cysteine 101–cysteine 125. N-linked (GlcNAc...) asparagine glycosylation is found at asparagine 38 and asparagine 68. Asparagine 116, asparagine 194, and asparagine 240 each carry an N-linked (GlcNAc...) asparagine glycan. Residues 178–307 (CKCKKVKPTL…IQDKKKTAGR (130 aa)) enclose the NTR domain. Residues 294–303 (QRRTIQDKKK) are compositionally biased toward basic and acidic residues. Residues 294 to 346 (QRRTIQDKKKTAGRTSRSNPPKPKGKPPAPKPASPKKNIKTRSAQKKTNPKKV) are disordered. Over residues 313–326 (PPKPKGKPPAPKPA) the composition is skewed to pro residues. Basic residues predominate over residues 330–346 (KNIKTRSAQKKTNPKKV).

The protein belongs to the secreted frizzled-related protein (sFRP) family.

The protein localises to the secreted. Soluble frizzled-related proteins (sFRPS) function as modulators of Wnt signaling through direct interaction with Wnts. They have a role in regulating cell growth and differentiation in specific cell types. SFRP4 plays a role in bone morphogenesis. May also act as a regulator of adult uterine morphology and function. May also increase apoptosis during ovulation possibly through modulation of FZ1/FZ4/WNT4 signaling. Has phosphaturic effects by specifically inhibiting sodium-dependent phosphate uptake. This is Secreted frizzled-related protein 4 (SFRP4) from Macaca mulatta (Rhesus macaque).